The chain runs to 699 residues: MAREYKIEDYRNFGIMAHIDAGKTTTTERILYYTGKSHKIGEVHDGAATMDWMEQEQERGITITSAATTTFWKGRDGKMRRFNIIDTPGHVDFTIEVERSLRVLDGAIALLDANAGVEPQTETVWRQAEKYNVPRMIFCNKMDKTGADFYRSVEMIKTRLGATAVVMQLPIGAESEFKGVVDLIEMNALVWRDESLGAQWDVVEIPADMKDKAEEYREKLIETVVEIDEAAMEAYLEGTYPDNDKIRELVRRGTIDVKFHPMFCGTAFKNKGVQPLLDAVVDYLPSPIDIPAIKGIDVKTEGEITRKADDNEPLSMLAFKIMNDPFVGSLTFARIYSGKLEKGTSVMNTVKEKRERVGRMLQMHSNSREDIEEAFAGDIVALAGLKETTTGDTLCDPLKPVILERMEFPEPVIQIAIEPKTKGDQEKMGLALNRLAAEDPSFRVKTDEESGQTIIAGMGELHLDIIVDRMRREFKVEASVGAPQVAYRETITRQHEEDYTHKKQSGGTGQFARVKIVFEPNPEGEDFAFESKIVGGAVPKEYIPGVQKGIESVLSSGPLAGFPMLGVKATLIDGAFHDVDSSVLAFEIASRACFREAAKKAGAQLLEPIMKVEVVTPEDYVGDVIGDLNSRRGQIQGQESRGVAVVINAHVPLANMFKYVDNLRSMSQGRAQYTMLFDHYAPVPSNVAQEIQAKYSGQK.

The tr-type G domain maps to 8–288 (EDYRNFGIMA…AVVDYLPSPI (281 aa)). GTP-binding positions include 17 to 24 (AHIDAGKT), 86 to 90 (DTPGH), and 140 to 143 (NKMD).

Belongs to the TRAFAC class translation factor GTPase superfamily. Classic translation factor GTPase family. EF-G/EF-2 subfamily.

The protein resides in the cytoplasm. Catalyzes the GTP-dependent ribosomal translocation step during translation elongation. During this step, the ribosome changes from the pre-translocational (PRE) to the post-translocational (POST) state as the newly formed A-site-bound peptidyl-tRNA and P-site-bound deacylated tRNA move to the P and E sites, respectively. Catalyzes the coordinated movement of the two tRNA molecules, the mRNA and conformational changes in the ribosome. This is Elongation factor G from Sinorhizobium fredii (strain NBRC 101917 / NGR234).